The sequence spans 1155 residues: uncharacterized protein (1155 aa).

The N-terminal stretch at 1 to 19 (MNKNIFITLLISSLLLLSG) is a signal peptide. Residue Cys-20 is the site of N-palmitoyl cysteine attachment. Residue Cys-20 is the site of S-diacylglycerol cysteine attachment. 4 helical membrane-spanning segments follow: residues 291 to 311 (VSAILTLYIMFTGFSFLIGNI), 395 to 415 (LGFIYIILYLIALYFIFFLIF), 424 to 444 (ALITIGMIIIMGPIFICFMLF), and 459 to 479 (ISYALQPIILFAGIAFISMII).

It belongs to the TrbL/VirB6 family.

Its subcellular location is the cell membrane. This is an uncharacterized protein from Rickettsia felis (strain ATCC VR-1525 / URRWXCal2) (Rickettsia azadi).